A 305-amino-acid chain; its full sequence is Transmembrane protein 74 (305 aa).

Disordered regions lie at residues 52–88 (ATEM…LLHS) and 123–143 (RNRS…GWEN). The span at 58–78 (SKLSSSPASPSSSLQNSTLQP) shows a compositional bias: low complexity. The next 2 membrane-spanning stretches (helical) occupy residues 178 to 198 (FISA…SYIV) and 232 to 252 (VIAG…LLMM).

This sequence belongs to the TMEM74 family. In terms of tissue distribution, expressed in heart, lung, and placenta.

Its subcellular location is the lysosome membrane. It localises to the cytoplasmic vesicle. The protein resides in the autophagosome membrane. Functionally, plays an essential role in autophagy. TMEM74-induced autophagy may involve PI3K signal transduction. This is Transmembrane protein 74 (TMEM74) from Homo sapiens (Human).